A 238-amino-acid polypeptide reads, in one-letter code: Uridylate kinase (238 aa).

12-15 contributes to the ATP binding site; the sequence is KLSG. Residue Gly54 coordinates UMP. The ATP site is built by Gly55 and Arg59. UMP-binding positions include Asp74 and 135 to 142; that span reads TGNPFFTT. ATP is bound by residues Thr162, Tyr168, and Asp171.

It belongs to the UMP kinase family. In terms of assembly, homohexamer.

The protein localises to the cytoplasm. It carries out the reaction UMP + ATP = UDP + ADP. The protein operates within pyrimidine metabolism; CTP biosynthesis via de novo pathway; UDP from UMP (UMPK route): step 1/1. Its activity is regulated as follows. Inhibited by UTP. Functionally, catalyzes the reversible phosphorylation of UMP to UDP. This Aromatoleum aromaticum (strain DSM 19018 / LMG 30748 / EbN1) (Azoarcus sp. (strain EbN1)) protein is Uridylate kinase.